A 114-amino-acid chain; its full sequence is uncharacterized protein (114 aa).

2 consecutive transmembrane segments (helical) span residues 14 to 34 and 75 to 95; these read VMSAIFKWLLLYSLPALCFLL and VIIILVPCWWHAVIVTQHPVA.

It localises to the membrane. This is an uncharacterized protein from Homo sapiens (Human).